Reading from the N-terminus, the 74-residue chain is Protein SspS (74 aa).

Belongs to the alpha/beta-type SASP family.

The protein is Protein SspS (sspS) of Streptococcus pyogenes.